Consider the following 309-residue polypeptide: MPIKVPNDLPAATVLENENMFVMRENRAASQDIRPLDLLILNLMPTKVETEIQIMRLLSNSPLQVNVRLLQMSSHVSKNTSQEYLDRFYDRFDDVKSRKWDGMIITGAPVENIDFEEVDYWDELCQIMEWSKKNVFSTLHICWGAQAGLNYHYGIPKYPLESKMSGVFAHKAIVRDDPLLRGCDDIFWFPHSRHTEVRAEDIIRNPHLHIIAVSDEAGVGIVVSENSGQVFVTGHMEYDAKTLSYEYYRDLGKGMNPHIPYHYFPDDDPSKDPVMNWRSTANLIFTNWLNYYVYQRVPYDINEIGKDSE.

C142 acts as the Acyl-thioester intermediate in catalysis. Substrate contacts are provided by K163 and S192. The active-site Proton acceptor is H235. The active site involves E237. R249 contributes to the substrate binding site.

The protein belongs to the MetA family.

It is found in the cytoplasm. It catalyses the reaction L-homoserine + acetyl-CoA = O-acetyl-L-homoserine + CoA. It functions in the pathway amino-acid biosynthesis; L-methionine biosynthesis via de novo pathway; O-acetyl-L-homoserine from L-homoserine: step 1/1. Functionally, transfers an acetyl group from acetyl-CoA to L-homoserine, forming acetyl-L-homoserine. This Methanomethylophilus alvi (strain Mx1201) protein is Homoserine O-acetyltransferase.